We begin with the raw amino-acid sequence, 276 residues long: Hydroxymethylpyrimidine/phosphomethylpyrimidine kinase (276 aa).

A 4-amino-5-hydroxymethyl-2-methylpyrimidine-binding site is contributed by glutamine 45.

Belongs to the ThiD family.

It carries out the reaction 4-amino-5-hydroxymethyl-2-methylpyrimidine + ATP = 4-amino-2-methyl-5-(phosphooxymethyl)pyrimidine + ADP + H(+). It catalyses the reaction 4-amino-2-methyl-5-(phosphooxymethyl)pyrimidine + ATP = 4-amino-2-methyl-5-(diphosphooxymethyl)pyrimidine + ADP. It participates in cofactor biosynthesis; thiamine diphosphate biosynthesis; 4-amino-2-methyl-5-diphosphomethylpyrimidine from 5-amino-1-(5-phospho-D-ribosyl)imidazole: step 2/3. The protein operates within cofactor biosynthesis; thiamine diphosphate biosynthesis; 4-amino-2-methyl-5-diphosphomethylpyrimidine from 5-amino-1-(5-phospho-D-ribosyl)imidazole: step 3/3. Its function is as follows. Catalyzes the phosphorylation of hydroxymethylpyrimidine phosphate (HMP-P) to HMP-PP, and of HMP to HMP-P. The chain is Hydroxymethylpyrimidine/phosphomethylpyrimidine kinase (thiD) from Staphylococcus aureus (strain MRSA252).